A 466-amino-acid polypeptide reads, in one-letter code: Ceramide glucosyltransferase 1 (466 aa).

Residues 70–90 (LALSGCIFVSVLYLVHIIAFF) traverse the membrane as a helical segment. Position 148 (D148) is a short sequence motif, D1. A short sequence motif (D2) is located at residue D200. D294 is a short sequence motif (D3). The active-site Proton acceptor is the D294. Positions 330–334 (RIGRW) match the (Q/R)XXRW motif. The next 2 membrane-spanning stretches (helical) occupy residues 354 to 374 (CVTS…YSVY) and 403 to 423 (TPFL…FIFI).

This sequence belongs to the glycosyltransferase 2 family. Expressed in excretory canals, pharyngeal intestinal valve, intestine and intestinal rectal valve.

It localises to the membrane. The enzyme catalyses an N-acylsphing-4-enine + UDP-alpha-D-glucose = a beta-D-glucosyl-(1&lt;-&gt;1')-N-acylsphing-4-enine + UDP + H(+). The catalysed reaction is an N-acyl-15-methylhexadecasphing-4-enine + UDP-alpha-D-glucose = an N-acyl-1-beta-D-glucosyl-15-methylhexadecasphing-4-enine + UDP + H(+). It participates in lipid metabolism; sphingolipid metabolism. Catalyzes the first glycosylation step in glycosphingolipid biosynthesis, the transfer of glucose to ceramide to produce glucosylceramides (GlcCer). GlcCer are known to contribute to the physical properties and physiological functions of membranes and may regulate signal transduction. Only branched-chain sphingoid bases like 15-methylhexadecasphing-4-enine are used for generating complex sphingolipids in Caenorhabditis elegans. Together with cgt-3, plays a role in the trafficking of proteins such as mig-14 to the cell membrane in intestinal cells. In Caenorhabditis elegans, this protein is Ceramide glucosyltransferase 1.